A 1120-amino-acid polypeptide reads, in one-letter code: Elongation factor-like GTPase 1 (1120 aa).

A tr-type G domain is found at 17–272 (ANIRNICVLA…LMKTLWGDYY (256 aa)). GTP is bound by residues 26-33 (AHVDHGKT), 92-96 (DSPGH), and 146-149 (NKID). The segment at 430–496 (PRPLTQEEIA…VESMTPKPVL (67 aa)) is disordered. Basic and acidic residues-rich tracts occupy residues 438–452 (IAQR…HAEK) and 475–484 (PKGEEPRGDE). Lys-528 is subject to N6-acetyllysine. Residues 907–930 (ASDLAKEGQEENETCSGGNENQEL) are disordered. The span at 920–930 (TCSGGNENQEL) shows a compositional bias: polar residues.

This sequence belongs to the TRAFAC class translation factor GTPase superfamily. Classic translation factor GTPase family. Associates with the 60S ribosomal subunit. Found in a complex consisting of the 60S ribosomal subunit, SBDS and EFL1. Interacts with SBDS and binds to GTP and GDP; the interaction with SBDS decreases EFL1 affinity for GDP and facilitates GDP release. As to expression, expressed at low levels in brain. Expression is highly increased in glioma tissues.

It carries out the reaction GTP + H2O = GDP + phosphate + H(+). With respect to regulation, GTPase activity is stimulated in the presence of 60S ribosome subunits. Its function is as follows. GTPase involved in the biogenesis of the 60S ribosomal subunit and translational activation of ribosomes. Together with SBDS, triggers the GTP-dependent release of EIF6 from 60S pre-ribosomes in the cytoplasm, thereby activating ribosomes for translation competence by allowing 80S ribosome assembly and facilitating EIF6 recycling to the nucleus, where it is required for 60S rRNA processing and nuclear export. This is Elongation factor-like GTPase 1 from Homo sapiens (Human).